The chain runs to 139 residues: Self-incompatibility protein S1 (139 aa).

Positions 1 to 19 are cleaved as a signal peptide; that stretch reads MNIFYVIVLLSFFLSKSSG. N-linked (GlcNAc...) asparagine glycosylation occurs at Asn-51.

The protein belongs to the plant self-incompatibility (S1) protein family. Post-translationally, glycosylated (S1b) and unglocosylated (S1a) forms coexist. In terms of tissue distribution, accumulates in the stigma (at protein level).

The protein resides in the secreted. Exhibits specific pollen self-inhibitory activity thus preventing self-fertilization. The sequence is that of Self-incompatibility protein S1 from Papaver rhoeas (Common poppy).